We begin with the raw amino-acid sequence, 853 residues long: DNA mismatch repair protein MutS (853 aa).

614–621 (GPNMGGKS) lines the ATP pocket.

It belongs to the DNA mismatch repair MutS family.

Functionally, this protein is involved in the repair of mismatches in DNA. It is possible that it carries out the mismatch recognition step. This protein has a weak ATPase activity. The chain is DNA mismatch repair protein MutS from Escherichia coli O7:K1 (strain IAI39 / ExPEC).